Reading from the N-terminus, the 347-residue chain is Quinolinate synthase (347 aa).

Residues His47 and Ser68 each contribute to the iminosuccinate site. Position 113 (Cys113) interacts with [4Fe-4S] cluster. Iminosuccinate contacts are provided by residues 139-141 (YAN) and Ser156. Cys200 serves as a coordination point for [4Fe-4S] cluster. Iminosuccinate is bound by residues 226 to 228 (HPE) and Thr243. Cys297 provides a ligand contact to [4Fe-4S] cluster.

This sequence belongs to the quinolinate synthase family. Type 1 subfamily. The cofactor is [4Fe-4S] cluster.

The protein resides in the cytoplasm. The catalysed reaction is iminosuccinate + dihydroxyacetone phosphate = quinolinate + phosphate + 2 H2O + H(+). Its pathway is cofactor biosynthesis; NAD(+) biosynthesis; quinolinate from iminoaspartate: step 1/1. Catalyzes the condensation of iminoaspartate with dihydroxyacetone phosphate to form quinolinate. The chain is Quinolinate synthase from Escherichia coli O139:H28 (strain E24377A / ETEC).